Consider the following 418-residue polypeptide: F-box protein At5g03970 (418 aa).

Positions 18-66 constitute an F-box domain; sequence STHEVLNSNDTMCEILILLPPETIYKLILVSKRWLEIIASPCFRHTYLA.

The polypeptide is F-box protein At5g03970 (Arabidopsis thaliana (Mouse-ear cress)).